Reading from the N-terminus, the 404-residue chain is Serine/threonine-protein kinase UCN (404 aa).

Residues 22–340 (LKVLKLLGKG…AAEIKEHAFF (319 aa)) form the Protein kinase domain. Residues 28–36 (LGKGATGTV) and Lys55 each bind ATP. Asp153 functions as the Proton acceptor in the catalytic mechanism. The segment at 185-207 (EFYHLSDPEPDPNPESNLSHNKK) is disordered. Residues 341-404 (KGVRWELLTE…CSENNPFVDF (64 aa)) enclose the AGC-kinase C-terminal domain.

This sequence belongs to the protein kinase superfamily. AGC Ser/Thr protein kinase family. Expressed in the epidermis and cortex of the transition zone of the root apex and developing flowers. Expressed in rosette leaves, stems and siliques.

The protein resides in the cytoplasm. It is found in the nucleus. It catalyses the reaction L-seryl-[protein] + ATP = O-phospho-L-seryl-[protein] + ADP + H(+). The enzyme catalyses L-threonyl-[protein] + ATP = O-phospho-L-threonyl-[protein] + ADP + H(+). In terms of biological role, regulates planar ovule integument development by suppressing aberrantly oriented growth. Maintains planar growth of integuments by repressing the developmental regulator and transcription factor KAN4 which is involved in the control of early integument growth and polarity. Restricts growth in stamen filaments, petals, and cotyledons. The polypeptide is Serine/threonine-protein kinase UCN (Arabidopsis thaliana (Mouse-ear cress)).